The primary structure comprises 333 residues: Taste receptor type 2 member 38 (333 aa).

The Extracellular portion of the chain corresponds to 1 to 17 (MLTLTRICTVSYEVRST). The helical transmembrane segment at 18-38 (FLFISVLEFAVGFLTNAFIFL) threads the bilayer. The Cytoplasmic portion of the chain corresponds to 39–55 (VNFWDVVKRQPLSNSDC). Residues 56 to 76 (VLLCLSISRLFLHGLLFLSAI) traverse the membrane as a helical segment. The Extracellular portion of the chain corresponds to 77–94 (QLTHFQKLSEPLNHSYHA). The helical transmembrane segment at 95–115 (IIMLWMIANQANLWLATCLSL) threads the bilayer. Residues 116–142 (LYCSKLIRSSHTFLICLASWVSRKICQ) lie on the Cytoplasmic side of the membrane. The helical transmembrane segment at 143–163 (MLLGIILCSCICTVLCVWCYF) threads the bilayer. Topologically, residues 164–190 (SRPHFTVTTVLFTNNNTRLNWQIKDLN) are extracellular. The N-linked (GlcNAc...) asparagine glycan is linked to asparagine 178. Residues 191-211 (LFYSFLFCYLWSVPPFLLFLV) traverse the membrane as a helical segment. The Cytoplasmic segment spans residues 212–251 (SSGMLTVSLGRHMRTMKVYTRDFRDPSLEAHIKALKSLVS). The chain crosses the membrane as a helical span at residues 252-272 (FFCFFVISSCAAFISVPLLIL). Residues 273-276 (WRDK) lie on the Extracellular side of the membrane. A helical membrane pass occupies residues 277–297 (IGVMVCVGIMAACPSGHAAIL). Residues 298–333 (ISGNAKLRRAVTTILLWAQSSLKVRADHKADSRTLC) are Cytoplasmic-facing.

This sequence belongs to the G-protein coupled receptor T2R family.

It localises to the membrane. Functionally, receptor that may play a role in the perception of bitterness and is gustducin-linked. May play a role in sensing the chemical composition of the gastrointestinal content. The activity of this receptor may stimulate alpha gustducin, mediate PLC-beta-2 activation and lead to the gating of TRPM5. This chain is Taste receptor type 2 member 38 (TAS2R38), found in Hylobates klossii (Kloss's gibbon).